Here is a 126-residue protein sequence, read N- to C-terminus: Aspartate 1-decarboxylase (126 aa).

The active-site Schiff-base intermediate with substrate; via pyruvic acid is Ser-25. Ser-25 is modified (pyruvic acid (Ser)). Residue Thr-57 coordinates substrate. Tyr-58 serves as the catalytic Proton donor. 73 to 75 (GAA) lines the substrate pocket.

It belongs to the PanD family. As to quaternary structure, heterooctamer of four alpha and four beta subunits. The cofactor is pyruvate. Is synthesized initially as an inactive proenzyme, which is activated by self-cleavage at a specific serine bond to produce a beta-subunit with a hydroxyl group at its C-terminus and an alpha-subunit with a pyruvoyl group at its N-terminus.

It is found in the cytoplasm. The enzyme catalyses L-aspartate + H(+) = beta-alanine + CO2. It functions in the pathway cofactor biosynthesis; (R)-pantothenate biosynthesis; beta-alanine from L-aspartate: step 1/1. Functionally, catalyzes the pyruvoyl-dependent decarboxylation of aspartate to produce beta-alanine. This Marinomonas sp. (strain MWYL1) protein is Aspartate 1-decarboxylase.